Here is a 296-residue protein sequence, read N- to C-terminus: MTNELPEIGSPARTKAILNRYRLVAKKSLGQNFLSDLNILRNIVAAGDVNDHDNVIEIGPGIGALTEQIAKRAHKVVAFEIDENLLPVLDETLMDYKNVKIINEDILKANLPAVVADEFEADRPLKLVANLPYYITTPILMGVLQSTVRFEAIVVMMQAEVAERLVAEPGTKAYGSLSVIMQYRAHVEIAFNVPRTAFIPQPNVDSAIIRLTPREALPVNPYEDKALFSFVKGCFAHRRKSLWNNLQGIFGKQPEVRERIETVLNQTGISRQLRPERLTLLNFIELTNAFHNEGLM.

6 residues coordinate S-adenosyl-L-methionine: asparagine 32, leucine 34, glycine 59, glutamate 80, aspartate 105, and asparagine 130.

The protein belongs to the class I-like SAM-binding methyltransferase superfamily. rRNA adenine N(6)-methyltransferase family. RsmA subfamily.

It is found in the cytoplasm. It carries out the reaction adenosine(1518)/adenosine(1519) in 16S rRNA + 4 S-adenosyl-L-methionine = N(6)-dimethyladenosine(1518)/N(6)-dimethyladenosine(1519) in 16S rRNA + 4 S-adenosyl-L-homocysteine + 4 H(+). Its function is as follows. Specifically dimethylates two adjacent adenosines (A1518 and A1519) in the loop of a conserved hairpin near the 3'-end of 16S rRNA in the 30S particle. May play a critical role in biogenesis of 30S subunits. This is Ribosomal RNA small subunit methyltransferase A from Levilactobacillus brevis (strain ATCC 367 / BCRC 12310 / CIP 105137 / JCM 1170 / LMG 11437 / NCIMB 947 / NCTC 947) (Lactobacillus brevis).